Here is a 604-residue protein sequence, read N- to C-terminus: Protein CBFA2T2 (604 aa).

The tract at residues 25–105 is disordered; it reads KRVPAMPGSP…SSTSSALTNQ (81 aa). S33 is subject to Phosphoserine. K38 participates in a covalent cross-link: Glycyl lysine isopeptide (Lys-Gly) (interchain with G-Cter in SUMO2). The span at 46 to 59 shows a compositional bias: pro residues; the sequence is PTMPPLPPINPGGP. 2 stretches are compositionally biased toward polar residues: residues 64–79 and 88–105; these read FTPT…SPPT and QRFS…LTNQ. The interaction with PRDM14 stretch occupies residues 107 to 215; that stretch reads LPATCGARQL…QHEHLLLNTS (109 aa). In terms of domain architecture, TAFH spans 113-208; it reads ARQLSKLKRF…TPSQYLAQHE (96 aa). A disordered region spans residues 229 to 265; that stretch reads VHGNGKRPSPERREENSFDRDTIAPEPPAKRVCTISP. A compositionally biased stretch (basic and acidic residues) spans 236–251; that stretch reads PSPERREENSFDRDTI. S264 carries the phosphoserine modification. The interval 331 to 377 is nervy homology region 2 (NHR2); sequence QDELVDHRLTEREWADEWKHLDHALNCIMEMVEKTRRSMAVLRRCQE. Positions 397-427 are disordered; it reads RKTGTELVSRQHSPGSADSLSNDSQREFNSR. Polar residues predominate over residues 402 to 419; that stretch reads ELVSRQHSPGSADSLSND. The residue at position 409 (S409) is a Phosphoserine. The nervy homology region 3 (NHR3) stretch occupies residues 435-484; that stretch reads VEFWKKTEEAVNKVKIQAMSEVQKAVAEAEQKAFEVIATERARMEQTIAD. K449 is covalently cross-linked (Glycyl lysine isopeptide (Lys-Gly) (interchain with G-Cter in SUMO2)). The stretch at 451-491 forms a coiled coil; that stretch reads QAMSEVQKAVAEAEQKAFEVIATERARMEQTIADVKRQAAE. Zn(2+) is bound by residues C507, C510, C518, C521, C527, C531, H539, and C543. The MYND-type zinc-finger motif lies at 507-543; sequence CWNCGRKASETCSGCNIARYCGSFCQHKDWERHHRLC. The tract at residues 547–604 is disordered; sequence LHGQSPHGQGRPLLPVGRGSSARSADCSVPSPALDKTSATTSRSSTPASVTAIDTNGL. At S577 the chain carries Phosphoserine. Low complexity predominate over residues 583–598; that stretch reads TSATTSRSSTPASVTA.

The protein belongs to the CBFA2T family. Homooligomer. Homotetramerization is mediated by nervy homology region 2. Can interact with RUNX1T1/CBFA2T1 and CBFA2T3/MTG16; heterotetramerization between members of the CBFA2T family is proposed. Forms a heterooligomer with the AML1-MTG8/ETO fusion protein. Interacts with PRDM14. Interacts with RBPJ, GFI1, TCF4. Interacts with TAL1 and CBFA2T3/MTG16; the heteromer with CBFA2T3/MTG16 may function in repression of TAL1. As to expression, ubiquitously expressed in fetal and adult tissues. Highly expressed in adult brain, heart, lung, kidney, lymph node, appendix, thymus, testis, uterus, small intestine, prostate and thymus.

The protein localises to the nucleus. Functionally, transcriptional corepressor which facilitates transcriptional repression via its association with DNA-binding transcription factors and recruitment of other corepressors and histone-modifying enzymes. Via association with PRDM14 is involved in regulation of embryonic stem cell (ESC) pluripotency. Involved in primordial germ cell (PCG) formation. Stabilizes PRDM14 and OCT4 on chromatin in a homooligomerization-dependent manner. Can repress the expression of MMP7 in a ZBTB33-dependent manner. May function as a complex with the chimeric protein RUNX1/AML1-CBFA2T1/MTG8 (AML1-MTG8/ETO fusion protein) which is produced in acute myeloid leukemia with the chromosomal translocation t(8;21). May thus be involved in the repression of AML1-dependent transcription and the induction of G-CSF/CSF3-dependent cell growth. May be a tumor suppressor gene candidate involved in myeloid tumors with the deletion of the 20q11 region. Through heteromerization with CBFA2T3/MTG16 may be involved in regulation of the proliferation and the differentiation of erythroid progenitors by repressing the expression of TAL1 target genes. Required for the maintenance of the secretory cell lineage in the small intestine. Can inhibit Notch signaling probably by association with RBPJ and may be involved in GFI1-mediated Paneth cell differentiation. The chain is Protein CBFA2T2 (CBFA2T2) from Homo sapiens (Human).